The chain runs to 66 residues: Beta-toxin Cbo4 (66 aa).

An LCN-type CS-alpha/beta domain is found at 1–66; sequence KEGYIVDYHT…VWPLPNKRCK (66 aa). Intrachain disulfides connect cysteine 12–cysteine 65, cysteine 16–cysteine 41, cysteine 25–cysteine 46, and cysteine 29–cysteine 48. Lysine 66 is modified (lysine amide).

It belongs to the long (4 C-C) scorpion toxin superfamily. Sodium channel inhibitor family. Beta subfamily. As to expression, expressed by the venom gland.

Its subcellular location is the secreted. Its function is as follows. Beta toxins bind voltage-independently at site-4 of sodium channels and shift the voltage of activation toward more negative potentials thereby affecting sodium channel activation and promoting spontaneous and repetitive firing. Is active on the human voltage-gated sodium channels Nav1.4/SCN4A, Nav1.5/SCN5A and Nav1.6/SCN8A when tested at 200 nM. In vivo, is toxic to mice when intraperitoneally injected. In Centruroides bonito (Scorpion), this protein is Beta-toxin Cbo4.